Consider the following 808-residue polypeptide: Phenylalanine--tRNA ligase beta subunit (808 aa).

The region spanning 40 to 149 (RPELDFVKIV…DQAEVGKTIR (110 aa)) is the tRNA-binding domain. The region spanning 407 to 484 (HKEVRIHTDI…RTKGYDTIQV (78 aa)) is the B5 domain. 4 residues coordinate Mg(2+): aspartate 462, aspartate 468, glutamate 471, and glutamate 472. The 93-residue stretch at 716 to 808 (SQFPEAEIDL…LAGKNGFVLR (93 aa)) folds into the FDX-ACB domain.

The protein belongs to the phenylalanyl-tRNA synthetase beta subunit family. Type 1 subfamily. In terms of assembly, tetramer of two alpha and two beta subunits. Mg(2+) is required as a cofactor.

Its subcellular location is the cytoplasm. It carries out the reaction tRNA(Phe) + L-phenylalanine + ATP = L-phenylalanyl-tRNA(Phe) + AMP + diphosphate + H(+). This Leptospira interrogans serogroup Icterohaemorrhagiae serovar copenhageni (strain Fiocruz L1-130) protein is Phenylalanine--tRNA ligase beta subunit.